Reading from the N-terminus, the 135-residue chain is Small ribosomal subunit protein eS6 (135 aa).

Belongs to the eukaryotic ribosomal protein eS6 family.

The sequence is that of Small ribosomal subunit protein eS6 from Halorubrum lacusprofundi (strain ATCC 49239 / DSM 5036 / JCM 8891 / ACAM 34).